The chain runs to 536 residues: MSEVGKRNPACPIDRIGLKTTGMVRYNFGAAALYEEAIRRGEARLTAHGALVAETGQHTGRSPKDKFVVRDAATEPEVWWDNNKAISPAQFETLFADFLAHAANKDLYVQDLVGGADAELKLPTRVITEFAWHSLFIRNLLIRPDKAELGQFVPEMTIIDLPSFRADPARHGSRTETVIAVDLTRQIVLIGGTSYAGEMKKSVFTMLNYILPQKGVMPMHCSANEGPAGDAAVFFGLSGTGKTTLSADPSRTLIGDDEHGWGPHGIFNFEGGCYAKTIKLSAEAEPEIFATTQRFGTVLENVVLDADGVPDFNDGRLTENTRCAYPLDFIPNASKTGRASHPKNIIMLTADAFGVMPPIARLTPAQAMYHFLSGYTAKVAGTEKGVTEPEATFSTCFGAPFMPRHPSEYGNLLRELIASHGADCWLVNTGWTGGAYGTGKRMPIKATRALLTAALDGSLKTGEFRTDANFGFEVPVAVPGVDSAILDPRSTWADKPAYDRQAARLVGMFAVNFEKFEPHVDATVMGAAPRMQEAAE.

Residues Arg-61, Tyr-195, and Lys-201 each coordinate substrate. ATP is bound by residues Lys-201, His-220, and 236–244; that span reads GLSGTGKTT. Lys-201 and His-220 together coordinate Mn(2+). Asp-257 serves as a coordination point for Mn(2+). Glu-285, Arg-322, and Thr-447 together coordinate ATP. A substrate-binding site is contributed by Arg-322.

This sequence belongs to the phosphoenolpyruvate carboxykinase (ATP) family. The cofactor is Mn(2+).

The protein resides in the cytoplasm. The enzyme catalyses oxaloacetate + ATP = phosphoenolpyruvate + ADP + CO2. It functions in the pathway carbohydrate biosynthesis; gluconeogenesis. In terms of biological role, involved in the gluconeogenesis. Catalyzes the conversion of oxaloacetate (OAA) to phosphoenolpyruvate (PEP) through direct phosphoryl transfer between the nucleoside triphosphate and OAA. The protein is Phosphoenolpyruvate carboxykinase (ATP) of Mesorhizobium japonicum (strain LMG 29417 / CECT 9101 / MAFF 303099) (Mesorhizobium loti (strain MAFF 303099)).